The sequence spans 1272 residues: Magnesium-chelatase subunit H (1272 aa).

The protein belongs to the Mg-chelatase subunit H family.

The catalysed reaction is protoporphyrin IX + Mg(2+) + ATP + H2O = Mg-protoporphyrin IX + ADP + phosphate + 3 H(+). It participates in porphyrin-containing compound metabolism; bacteriochlorophyll biosynthesis (light-independent). Involved in bacteriochlorophyll pigment biosynthesis; introduces a magnesium ion into protoporphyrin IX to yield Mg-protoroporphyrin IX. The protein is Magnesium-chelatase subunit H (bchH) of Chlorobaculum parvum (strain DSM 263 / NCIMB 8327) (Chlorobium vibrioforme subsp. thiosulfatophilum).